The primary structure comprises 771 residues: Carnitine O-palmitoyltransferase 1, muscle isoform (771 aa).

Topologically, residues 1–47 (MAEAHQAVAFQFTVTPEGVDFQLSREVLKHIYLSVIRSWKKRLIRIK) are cytoplasmic. The chain crosses the membrane as a helical span at residues 48–73 (NGILRGVYPGSPTSWLVVVMATAGSS). Over 74-101 (YYNVDISMGLVYYIQRWLPEGRPYRTPY) the chain is Mitochondrial intermembrane. Residues 102–121 (TRTLFSMAIFSTGVWMMGIF) traverse the membrane as a helical segment. Topologically, residues 122 to 771 (FFRQTLKLLL…NLFQVPKADG (650 aa)) are cytoplasmic. His-472 (proton acceptor) is an active-site residue. 554–566 (GKGLIKKCRTSPD) is a binding site for CoA. The (R)-carnitine site is built by Tyr-588 and Thr-601.

It belongs to the carnitine/choline acetyltransferase family.

It is found in the mitochondrion outer membrane. The catalysed reaction is (R)-carnitine + hexadecanoyl-CoA = O-hexadecanoyl-(R)-carnitine + CoA. Its pathway is lipid metabolism; fatty acid beta-oxidation. In terms of biological role, catalyzes the transfer of the acyl group of long-chain fatty acid-CoA conjugates onto carnitine, an essential step for the mitochondrial uptake of long-chain fatty acids and their subsequent beta-oxidation in the mitochondrion. In Bos taurus (Bovine), this protein is Carnitine O-palmitoyltransferase 1, muscle isoform (CPT1B).